Here is a 114-residue protein sequence, read N- to C-terminus: Protein LLP homolog (114 aa).

Basic residues-rich tracts occupy residues 1–21 (MAKS…RKKN) and 91–108 (QRKK…KSKL). Disordered regions lie at residues 1–23 (MAKS…KNAP) and 91–114 (QRKK…GLAW).

This sequence belongs to the learning-associated protein family.

Its subcellular location is the nucleus. It localises to the nucleolus. The protein localises to the chromosome. Regulates dendritic and spine growth and synaptic transmission. The polypeptide is Protein LLP homolog (LLPH) (Gallus gallus (Chicken)).